Here is a 369-residue protein sequence, read N- to C-terminus: MSKRDTSQPKTGQPKTSKRRNGLTYAEAGVDIDAGNLMVEKIKPLVRATRRPGADGEIGGFGGLFDLKAAGFTDPVLVAANDGVGTKLKIAIDAGKHDTIGIDLVAMCVNDIVVQGAEPLFFLDYFATGKLDPDQGAAIVGGIAEGCRQAGCALIGGETAEMPGMYHGNDYDLAGFAVGAAERGQLLPTDDIVEGDVLLGLASSGLHSNGFSLVRRIVAASGLAWSDPAPFNDEATLAEALLEPTRIYVKSILKAIRNTHGIKALAHITGGGFPENIPRVLPKDFSAELDLEAIDVPPVFSWLAKTGGVAPEEMMRTFNCGVGMILAVASGQAAQVAAVLQEAGETVTPIGRIVPRRDAGVIYRGSIGL.

The disordered stretch occupies residues 1–22 (MSKRDTSQPKTGQPKTSKRRNG).

Belongs to the AIR synthase family.

The protein localises to the cytoplasm. It carries out the reaction 2-formamido-N(1)-(5-O-phospho-beta-D-ribosyl)acetamidine + ATP = 5-amino-1-(5-phospho-beta-D-ribosyl)imidazole + ADP + phosphate + H(+). The protein operates within purine metabolism; IMP biosynthesis via de novo pathway; 5-amino-1-(5-phospho-D-ribosyl)imidazole from N(2)-formyl-N(1)-(5-phospho-D-ribosyl)glycinamide: step 2/2. In Mesorhizobium japonicum (strain LMG 29417 / CECT 9101 / MAFF 303099) (Mesorhizobium loti (strain MAFF 303099)), this protein is Phosphoribosylformylglycinamidine cyclo-ligase.